Reading from the N-terminus, the 514-residue chain is 1-pyrroline-5-carboxylate dehydrogenase (514 aa).

Residues E286 and C320 contribute to the active site.

This sequence belongs to the aldehyde dehydrogenase family. RocA subfamily.

The enzyme catalyses L-glutamate 5-semialdehyde + NAD(+) + H2O = L-glutamate + NADH + 2 H(+). The protein operates within amino-acid degradation; L-proline degradation into L-glutamate; L-glutamate from L-proline: step 2/2. The protein is 1-pyrroline-5-carboxylate dehydrogenase of Staphylococcus aureus (strain MRSA252).